The sequence spans 361 residues: D-alanine--D-alanine ligase (361 aa).

One can recognise an ATP-grasp domain in the interval 144-350; it reads KLAAADAGLA…FMELTDRLIR (207 aa). 177 to 232 serves as a coordination point for ATP; it reads VASLSFPMFVKPVSLGSSVGITKVNSESELAEAITHACSLDSKVLIEQAVKGREVE. Mg(2+) contacts are provided by D303, E317, and N319.

It belongs to the D-alanine--D-alanine ligase family. Mg(2+) is required as a cofactor. The cofactor is Mn(2+).

It is found in the cytoplasm. The enzyme catalyses 2 D-alanine + ATP = D-alanyl-D-alanine + ADP + phosphate + H(+). The protein operates within cell wall biogenesis; peptidoglycan biosynthesis. Functionally, cell wall formation. In Chlorobium luteolum (strain DSM 273 / BCRC 81028 / 2530) (Pelodictyon luteolum), this protein is D-alanine--D-alanine ligase.